The chain runs to 754 residues: Probable galactinol--sucrose galactosyltransferase 1 (754 aa).

The protein belongs to the glycosyl hydrolases 36 family.

It carries out the reaction alpha-D-galactosyl-(1-&gt;3)-1D-myo-inositol + sucrose = raffinose + myo-inositol. In terms of biological role, transglycosidase operating by a ping-pong reaction mechanism. Involved in the synthesis of raffinose, a major soluble carbohydrate in seeds, roots and tubers. The chain is Probable galactinol--sucrose galactosyltransferase 1 (RFS1) from Arabidopsis thaliana (Mouse-ear cress).